Here is a 57-residue protein sequence, read N- to C-terminus: Small ribosomal subunit protein bS21 (57 aa).

Residues 32 to 42 are compositionally biased toward basic and acidic residues; the sequence is VRRREHYEKPS. The disordered stretch occupies residues 32–57; the sequence is VRRREHYEKPSQRRKRKLEASRRRRR. Basic residues predominate over residues 43–57; it reads QRRKRKLEASRRRRR.

Belongs to the bacterial ribosomal protein bS21 family.

This Synechococcus elongatus (strain ATCC 33912 / PCC 7942 / FACHB-805) (Anacystis nidulans R2) protein is Small ribosomal subunit protein bS21.